The following is a 331-amino-acid chain: Lipoyl synthase (331 aa).

A compositionally biased stretch (polar residues) spans 1–14 (MSTQLDASQPSNDV). The tract at residues 1-32 (MSTQLDASQPSNDVASPAAYDPTQKQKSQAKT) is disordered. 7 residues coordinate [4Fe-4S] cluster: C78, C83, C89, C104, C108, C111, and S318. A Radical SAM core domain is found at 89–307 (CFGKGTATFM…EREAYAMGFS (219 aa)).

The protein belongs to the radical SAM superfamily. Lipoyl synthase family. It depends on [4Fe-4S] cluster as a cofactor.

The protein localises to the cytoplasm. The catalysed reaction is [[Fe-S] cluster scaffold protein carrying a second [4Fe-4S](2+) cluster] + N(6)-octanoyl-L-lysyl-[protein] + 2 oxidized [2Fe-2S]-[ferredoxin] + 2 S-adenosyl-L-methionine + 4 H(+) = [[Fe-S] cluster scaffold protein] + N(6)-[(R)-dihydrolipoyl]-L-lysyl-[protein] + 4 Fe(3+) + 2 hydrogen sulfide + 2 5'-deoxyadenosine + 2 L-methionine + 2 reduced [2Fe-2S]-[ferredoxin]. Its pathway is protein modification; protein lipoylation via endogenous pathway; protein N(6)-(lipoyl)lysine from octanoyl-[acyl-carrier-protein]: step 2/2. In terms of biological role, catalyzes the radical-mediated insertion of two sulfur atoms into the C-6 and C-8 positions of the octanoyl moiety bound to the lipoyl domains of lipoate-dependent enzymes, thereby converting the octanoylated domains into lipoylated derivatives. The polypeptide is Lipoyl synthase (Bordetella avium (strain 197N)).